We begin with the raw amino-acid sequence, 262 residues long: Flap endonuclease Xni (262 aa).

Asp105 contacts Mg(2+). A 5'-3' exonuclease domain is found at 162 to 259; the sequence is ERSQFLDLMA…VIDSQPEKTI (98 aa). 5 residues coordinate K(+): Leu172, Ala173, Pro181, Ile183, and Ile186. Positions 185–190 are interaction with DNA; that stretch reads GIGPKS.

The protein belongs to the Xni family. Mg(2+) serves as cofactor. It depends on K(+) as a cofactor.

Has flap endonuclease activity. During DNA replication, flap endonucleases cleave the 5'-overhanging flap structure that is generated by displacement synthesis when DNA polymerase encounters the 5'-end of a downstream Okazaki fragment. The protein is Flap endonuclease Xni of Shewanella baltica (strain OS185).